Here is a 630-residue protein sequence, read N- to C-terminus: 1-deoxy-D-xylulose-5-phosphate synthase (630 aa).

Residues H87 and 128-130 (GHS) contribute to the thiamine diphosphate site. D159 is a Mg(2+) binding site. Thiamine diphosphate-binding positions include 160–161 (GA), N188, F295, and E377. N188 contributes to the Mg(2+) binding site.

It belongs to the transketolase family. DXPS subfamily. In terms of assembly, homodimer. Mg(2+) is required as a cofactor. Thiamine diphosphate serves as cofactor.

It catalyses the reaction D-glyceraldehyde 3-phosphate + pyruvate + H(+) = 1-deoxy-D-xylulose 5-phosphate + CO2. It functions in the pathway metabolic intermediate biosynthesis; 1-deoxy-D-xylulose 5-phosphate biosynthesis; 1-deoxy-D-xylulose 5-phosphate from D-glyceraldehyde 3-phosphate and pyruvate: step 1/1. Its function is as follows. Catalyzes the acyloin condensation reaction between C atoms 2 and 3 of pyruvate and glyceraldehyde 3-phosphate to yield 1-deoxy-D-xylulose-5-phosphate (DXP). This chain is 1-deoxy-D-xylulose-5-phosphate synthase, found in Pseudomonas syringae pv. syringae (strain B728a).